We begin with the raw amino-acid sequence, 380 residues long: MIYKFNIRNLRMIIMKLVKDALSRSDTTRYLKDEFGEARIVVVGCGGAGNNTINRLMEIGIQGAETIAINTDKQHLEVIQADKKILIGATLTRGLGAGGYPEIGRKAAEMAKNILEEQLKGADLVFVTAGMGGGTGTGSAPVVAEVAKENGAIVVGVVTYPFKIERARMKKADEGIARMSEVCDTVIIIDNNKLLDLVPNLPINDAFKVADEIIAQAVKGITETIAVPSLINIDFADVKAVMSGGGVAMIGVGEVDSSDRGDRVQNVVRETLSCPLLDVDYRGAKGALIHITGGPDLTLKEANDIGEGITKELDPEANVIWGARIDPEMEGCIRVMAIITGVKSPNIVGKDTKPKRIIPKVSKEQSQRKERKIGGIDFIV.

Residues 47 to 51 (GAGNN), 134 to 136 (GTG), E165, R168, and D211 each bind GTP.

Belongs to the FtsZ family. Homodimer. Polymerizes to form a dynamic ring structure in a strictly GTP-dependent manner. Interacts directly with several other division proteins.

It localises to the cytoplasm. In terms of biological role, essential cell division protein that forms a contractile ring structure (Z ring) at the future cell division site. The regulation of the ring assembly controls the timing and the location of cell division. One of the functions of the FtsZ ring is to recruit other cell division proteins to the septum to produce a new cell wall between the dividing cells. Binds GTP and shows GTPase activity. This chain is Cell division protein FtsZ 2, found in Methanocaldococcus jannaschii (strain ATCC 43067 / DSM 2661 / JAL-1 / JCM 10045 / NBRC 100440) (Methanococcus jannaschii).